The chain runs to 659 residues: UvrABC system protein B (659 aa).

The region spanning 25–182 (QSIENGNRGQ…KKLIEIQYER (158 aa)) is the Helicase ATP-binding domain. Position 38-45 (38-45 (GVTGSGKT)) interacts with ATP. A Beta-hairpin motif is present at residues 91 to 114 (YYDYYQPEAYVPQTDTFIEKDASI). One can recognise a Helicase C-terminal domain in the interval 429-582 (QIDDLYGEIQ…QMEYNEEHNI (154 aa)). The 36-residue stretch at 622–657 (EKLIEQYEEEMKEAAKNLQFERAAELRDIIKDLKEN) folds into the UVR domain.

This sequence belongs to the UvrB family. As to quaternary structure, forms a heterotetramer with UvrA during the search for lesions. Interacts with UvrC in an incision complex.

Its subcellular location is the cytoplasm. Functionally, the UvrABC repair system catalyzes the recognition and processing of DNA lesions. A damage recognition complex composed of 2 UvrA and 2 UvrB subunits scans DNA for abnormalities. Upon binding of the UvrA(2)B(2) complex to a putative damaged site, the DNA wraps around one UvrB monomer. DNA wrap is dependent on ATP binding by UvrB and probably causes local melting of the DNA helix, facilitating insertion of UvrB beta-hairpin between the DNA strands. Then UvrB probes one DNA strand for the presence of a lesion. If a lesion is found the UvrA subunits dissociate and the UvrB-DNA preincision complex is formed. This complex is subsequently bound by UvrC and the second UvrB is released. If no lesion is found, the DNA wraps around the other UvrB subunit that will check the other stand for damage. The polypeptide is UvrABC system protein B (Clostridium perfringens (strain ATCC 13124 / DSM 756 / JCM 1290 / NCIMB 6125 / NCTC 8237 / Type A)).